The primary structure comprises 1216 residues: Regulator of telomere elongation helicase 1 (1216 aa).

The Helicase ATP-binding domain occupies 7 to 295 (KGVTVDFPFQ…TKVAQQAELH (289 aa)). ATP is bound at residue 42–49 (SPTGTGKT). [4Fe-4S] cluster-binding residues include Cys144, Cys162, Cys171, and Cys206. A Nuclear localization signal motif is present at residues 150–166 (KKQESNHMQVHLCRRKV). A DEAH box motif is present at residues 249–252 (DEAH). Residues 874–880 (QRGRRRK) carry the Nuclear localization signal motif. Disordered stretches follow at residues 978–1018 (GCSS…ATRQ) and 1140–1172 (GPGT…RKTQ). Residues 1172–1179 (QSKISSFL) carry the PIP-box motif.

Belongs to the helicase family. RAD3/XPD subfamily. As to quaternary structure, interacts with TERF1. Interacts (via PIP-box) with PCNA; the interaction is direct and essential for suppressing telomere fragility. Interacts with MMS19; the interaction mediates the association of RTEL1 with the cytosolic iron-sulfur protein assembly (CIA) complex. In terms of tissue distribution, highly expressed in adult testis, liver and ovary.

The protein resides in the nucleus. The enzyme catalyses ATP + H2O = ADP + phosphate + H(+). Functionally, a probable ATP-dependent DNA helicase implicated in telomere-length regulation, DNA repair and the maintenance of genomic stability. Acts as an anti-recombinase to counteract toxic recombination and limit crossover during meiosis. Regulates meiotic recombination and crossover homeostasis by physically dissociating strand invasion events and thereby promotes noncrossover repair by meiotic synthesis dependent strand annealing (SDSA) as well as disassembly of D loop recombination intermediates. Also disassembles T loops and prevents telomere fragility by counteracting telomeric G4-DNA structures, which together ensure the dynamics and stability of the telomere. This is Regulator of telomere elongation helicase 1 from Bos taurus (Bovine).